Here is a 155-residue protein sequence, read N- to C-terminus: Ribosome maturation factor RimP (155 aa).

Belongs to the RimP family.

It localises to the cytoplasm. Its function is as follows. Required for maturation of 30S ribosomal subunits. This is Ribosome maturation factor RimP from Gemmatimonas aurantiaca (strain DSM 14586 / JCM 11422 / NBRC 100505 / T-27).